Consider the following 255-residue polypeptide: High-affinity branched-chain amino acid transport ATP-binding protein LivG (255 aa).

The ABC transporter domain maps to 6–254 (LSVNGLMMRF…PDVIRAYLGE (249 aa)). 38 to 45 (GPNGAGKT) contributes to the ATP binding site.

The protein belongs to the ABC transporter superfamily.

Component of the leucine-specific transport system. This chain is High-affinity branched-chain amino acid transport ATP-binding protein LivG (livG), found in Escherichia coli O157:H7.